The sequence spans 301 residues: Putative MgpC-like protein MPN_093 (301 aa).

This sequence belongs to the MgpC family.

The polypeptide is Putative MgpC-like protein MPN_093 (Mycoplasma pneumoniae (strain ATCC 29342 / M129 / Subtype 1) (Mycoplasmoides pneumoniae)).